A 521-amino-acid chain; its full sequence is Probable glycogen synthase (521 aa).

It belongs to the glycosyltransferase 1 family. Bacterial/plant glycogen synthase subfamily.

The catalysed reaction is [(1-&gt;4)-alpha-D-glucosyl](n) + ADP-alpha-D-glucose = [(1-&gt;4)-alpha-D-glucosyl](n+1) + ADP + H(+). The protein operates within glycan biosynthesis; glycogen biosynthesis. Synthesizes alpha-1,4-glucan chains using ADP-glucose. The protein is Probable glycogen synthase (glgA) of Methanocaldococcus jannaschii (strain ATCC 43067 / DSM 2661 / JAL-1 / JCM 10045 / NBRC 100440) (Methanococcus jannaschii).